Reading from the N-terminus, the 197-residue chain is Imidazoleglycerol-phosphate dehydratase (197 aa).

The protein belongs to the imidazoleglycerol-phosphate dehydratase family.

Its subcellular location is the cytoplasm. It catalyses the reaction D-erythro-1-(imidazol-4-yl)glycerol 3-phosphate = 3-(imidazol-4-yl)-2-oxopropyl phosphate + H2O. It functions in the pathway amino-acid biosynthesis; L-histidine biosynthesis; L-histidine from 5-phospho-alpha-D-ribose 1-diphosphate: step 6/9. The protein is Imidazoleglycerol-phosphate dehydratase of Nitrosococcus oceani (strain ATCC 19707 / BCRC 17464 / JCM 30415 / NCIMB 11848 / C-107).